The primary structure comprises 454 residues: Bifunctional protein GlmU (454 aa).

The tract at residues 1–232 (MTDRTCLSIV…VDNVIGINNR (232 aa)) is pyrophosphorylase. UDP-N-acetyl-alpha-D-glucosamine contacts are provided by residues 11–14 (LAAG), K25, Q78, and 83–84 (GT). Mg(2+) is bound at residue D108. The UDP-N-acetyl-alpha-D-glucosamine site is built by G144, E158, N173, and N230. N230 is a Mg(2+) binding site. The linker stretch occupies residues 233-253 (AELAEAETIWQNRKRRELMLS). An N-acetyltransferase region spans residues 254-454 (GVTLIAPETV…AIKAAKSVSK (201 aa)). The UDP-N-acetyl-alpha-D-glucosamine site is built by R319 and K337. The active-site Proton acceptor is H349. Y352 and N363 together coordinate UDP-N-acetyl-alpha-D-glucosamine. Acetyl-CoA contacts are provided by residues A366, 372–373 (NY), S391, S409, and R426.

In the N-terminal section; belongs to the N-acetylglucosamine-1-phosphate uridyltransferase family. It in the C-terminal section; belongs to the transferase hexapeptide repeat family. As to quaternary structure, homotrimer. Requires Mg(2+) as cofactor.

Its subcellular location is the cytoplasm. The catalysed reaction is alpha-D-glucosamine 1-phosphate + acetyl-CoA = N-acetyl-alpha-D-glucosamine 1-phosphate + CoA + H(+). The enzyme catalyses N-acetyl-alpha-D-glucosamine 1-phosphate + UTP + H(+) = UDP-N-acetyl-alpha-D-glucosamine + diphosphate. It participates in nucleotide-sugar biosynthesis; UDP-N-acetyl-alpha-D-glucosamine biosynthesis; N-acetyl-alpha-D-glucosamine 1-phosphate from alpha-D-glucosamine 6-phosphate (route II): step 2/2. Its pathway is nucleotide-sugar biosynthesis; UDP-N-acetyl-alpha-D-glucosamine biosynthesis; UDP-N-acetyl-alpha-D-glucosamine from N-acetyl-alpha-D-glucosamine 1-phosphate: step 1/1. It functions in the pathway bacterial outer membrane biogenesis; LPS lipid A biosynthesis. Its function is as follows. Catalyzes the last two sequential reactions in the de novo biosynthetic pathway for UDP-N-acetylglucosamine (UDP-GlcNAc). The C-terminal domain catalyzes the transfer of acetyl group from acetyl coenzyme A to glucosamine-1-phosphate (GlcN-1-P) to produce N-acetylglucosamine-1-phosphate (GlcNAc-1-P), which is converted into UDP-GlcNAc by the transfer of uridine 5-monophosphate (from uridine 5-triphosphate), a reaction catalyzed by the N-terminal domain. The chain is Bifunctional protein GlmU from Brucella canis (strain ATCC 23365 / NCTC 10854 / RM-666).